The chain runs to 101 residues: Nucleoid-associated protein Cla_0113 (101 aa).

Belongs to the YbaB/EbfC family. In terms of assembly, homodimer.

The protein localises to the cytoplasm. It is found in the nucleoid. Functionally, binds to DNA and alters its conformation. May be involved in regulation of gene expression, nucleoid organization and DNA protection. The chain is Nucleoid-associated protein Cla_0113 from Campylobacter lari (strain RM2100 / D67 / ATCC BAA-1060).